The primary structure comprises 228 residues: Phosphoglycolate phosphatase (228 aa).

D12 serves as the catalytic Nucleophile. Residues D12, D14, and D177 each contribute to the Mg(2+) site.

The protein belongs to the HAD-like hydrolase superfamily. CbbY/CbbZ/Gph/YieH family. The cofactor is Mg(2+).

The enzyme catalyses 2-phosphoglycolate + H2O = glycolate + phosphate. It participates in organic acid metabolism; glycolate biosynthesis; glycolate from 2-phosphoglycolate: step 1/1. Specifically catalyzes the dephosphorylation of 2-phosphoglycolate. Is involved in the dissimilation of the intracellular 2-phosphoglycolate formed during the DNA repair of 3'-phosphoglycolate ends, a major class of DNA lesions induced by oxidative stress. In Vibrio vulnificus (strain YJ016), this protein is Phosphoglycolate phosphatase.